Here is a 591-residue protein sequence, read N- to C-terminus: Aspartate--tRNA(Asp/Asn) ligase (591 aa).

Glutamate 176 is a binding site for L-aspartate. An aspartate region spans residues glutamine 200–lysine 203. Residue arginine 222 coordinates L-aspartate. Residues arginine 222–glutamate 224 and glutamine 231 contribute to the ATP site. L-aspartate is bound at residue histidine 450. Glutamate 484 serves as a coordination point for ATP. Arginine 491 lines the L-aspartate pocket. ATP is bound at residue glycine 536 to arginine 539.

Belongs to the class-II aminoacyl-tRNA synthetase family. Type 1 subfamily. Homodimer.

It is found in the cytoplasm. The enzyme catalyses tRNA(Asx) + L-aspartate + ATP = L-aspartyl-tRNA(Asx) + AMP + diphosphate. Aspartyl-tRNA synthetase with relaxed tRNA specificity since it is able to aspartylate not only its cognate tRNA(Asp) but also tRNA(Asn). Reaction proceeds in two steps: L-aspartate is first activated by ATP to form Asp-AMP and then transferred to the acceptor end of tRNA(Asp/Asn). The chain is Aspartate--tRNA(Asp/Asn) ligase from Bacillus cereus (strain G9842).